The following is a 943-amino-acid chain: Isoleucine--tRNA ligase (943 aa).

Positions 58–68 (PYANGSIHIGH) match the 'HIGH' region motif. E567 provides a ligand contact to L-isoleucyl-5'-AMP. The 'KMSKS' region motif lies at 608 to 612 (KMSKS). ATP is bound at residue K611. Zn(2+) contacts are provided by C906, C909, C926, and C929.

The protein belongs to the class-I aminoacyl-tRNA synthetase family. IleS type 1 subfamily. Monomer. The cofactor is Zn(2+).

The protein localises to the cytoplasm. It catalyses the reaction tRNA(Ile) + L-isoleucine + ATP = L-isoleucyl-tRNA(Ile) + AMP + diphosphate. In terms of biological role, catalyzes the attachment of isoleucine to tRNA(Ile). As IleRS can inadvertently accommodate and process structurally similar amino acids such as valine, to avoid such errors it has two additional distinct tRNA(Ile)-dependent editing activities. One activity is designated as 'pretransfer' editing and involves the hydrolysis of activated Val-AMP. The other activity is designated 'posttransfer' editing and involves deacylation of mischarged Val-tRNA(Ile). The sequence is that of Isoleucine--tRNA ligase from Pseudomonas aeruginosa (strain UCBPP-PA14).